The sequence spans 403 residues: Accessory Sec system protein translocase subunit SecY2 (403 aa).

10 helical membrane-spanning segments follow: residues 17-37, 63-83, 105-125, 131-151, 157-177, 186-206, 240-260, 276-296, 339-359, and 366-386; these read MLYT…SIVS, LNIF…LMLI, ILTL…YVSK, DNIY…VWLA, YGIA…MMHQ, HIVI…LLFI, ITLM…HFIL, FDSP…GYFL, WFGS…TLFV, and IYFS…AETI.

This sequence belongs to the SecY/SEC61-alpha family. SecY2 subfamily. As to quaternary structure, component of the accessory SecA2/SecY2 protein translocase complex required to export cell wall proteins. May form heterotrimers with SecE and SecG subunits.

The protein localises to the cell membrane. Its function is as follows. Part of the accessory SecA2/SecY2 system specifically required for export of possible cell wall proteins. The central subunit of a protein translocation channel. The sequence is that of Accessory Sec system protein translocase subunit SecY2 from Staphylococcus aureus (strain N315).